The following is a 199-amino-acid chain: dCTP deaminase, dUMP-forming (199 aa).

Residues 101–106 (KSSLGR), aspartate 119, 127–129 (TLE), glutamine 148, tyrosine 162, and glutamine 174 each bind dCTP. The Proton donor/acceptor role is filled by glutamate 129. The tract at residues 163 to 199 (GSAAAGSKYQGQRGPTPSRSYLNFPLPSDAVDAVESR) is disordered. Residues 171-183 (YQGQRGPTPSRSY) are compositionally biased toward polar residues.

It belongs to the dCTP deaminase family. Homotrimer.

It carries out the reaction dCTP + 2 H2O = dUMP + NH4(+) + diphosphate. It participates in pyrimidine metabolism; dUMP biosynthesis; dUMP from dCTP: step 1/1. Its function is as follows. Bifunctional enzyme that catalyzes both the deamination of dCTP to dUTP and the hydrolysis of dUTP to dUMP without releasing the toxic dUTP intermediate. The chain is dCTP deaminase, dUMP-forming from Nocardia farcinica (strain IFM 10152).